The primary structure comprises 676 residues: RNA helicase NPH-II (676 aa).

The region spanning phenylalanine 172 to histidine 347 is the Helicase ATP-binding domain. Glycine 185–threonine 192 serves as a coordination point for ATP. The short motif at aspartate 296–histidine 299 is the DEXH box element. One can recognise a Helicase C-terminal domain in the interval asparagine 366–asparagine 535.

It belongs to the DEAD box helicase family. DEAH subfamily. In terms of assembly, monomer.

The protein localises to the virion. It carries out the reaction ATP + H2O = ADP + phosphate + H(+). Its function is as follows. NTP-dependent helicase that catalyzes unidirectional unwinding of 3'tailed duplex RNAs and plays an important role during transcription of early mRNAs, presumably by preventing R-loop formation behind the elongating RNA polymerase. Might also play a role in the export of newly synthesized mRNA chains out of the core into the cytoplasm. Required for replication and propagation of viral particles. This Vaccinia virus (strain Ankara) (VACV) protein is RNA helicase NPH-II (OPG084).